We begin with the raw amino-acid sequence, 467 residues long: Ribulose bisphosphate carboxylase large chain (467 aa).

At Lys5 the chain carries N6,N6,N6-trimethyllysine. Substrate-binding residues include Asn114 and Thr164. Lys166 serves as the catalytic Proton acceptor. Lys168 provides a ligand contact to substrate. Mg(2+)-binding residues include Lys192, Asp194, and Glu195. At Lys192 the chain carries N6-carboxylysine. The active-site Proton acceptor is His285. 3 residues coordinate substrate: Arg286, His318, and Ser370.

Belongs to the RuBisCO large chain family. Type I subfamily. Heterohexadecamer of 8 large chains and 8 small chains; disulfide-linked. The disulfide link is formed within the large subunit homodimers. Mg(2+) serves as cofactor. The disulfide bond which can form in the large chain dimeric partners within the hexadecamer appears to be associated with oxidative stress and protein turnover.

It localises to the plastid. The protein localises to the chloroplast. The catalysed reaction is 2 (2R)-3-phosphoglycerate + 2 H(+) = D-ribulose 1,5-bisphosphate + CO2 + H2O. The enzyme catalyses D-ribulose 1,5-bisphosphate + O2 = 2-phosphoglycolate + (2R)-3-phosphoglycerate + 2 H(+). Functionally, ruBisCO catalyzes two reactions: the carboxylation of D-ribulose 1,5-bisphosphate, the primary event in carbon dioxide fixation, as well as the oxidative fragmentation of the pentose substrate in the photorespiration process. Both reactions occur simultaneously and in competition at the same active site. This chain is Ribulose bisphosphate carboxylase large chain, found in Eriodictyon californicum (California yerba santa).